The following is a 621-amino-acid chain: DEAD-box ATP-dependent RNA helicase 39 (621 aa).

A Q motif motif is present at residues 112-140 (ENFQELGLSEEVMGALQELNIEVPTEIQC). Positions 143 to 330 (IPAVMERKSV…DEEFQGIEHL (188 aa)) constitute a Helicase ATP-binding domain. 156–163 (SHTGSGKT) contributes to the ATP binding site. The DEAD box motif lies at 270–273 (DEAD). Residues 355-505 (KLEALLQVLE…LESLTTDNVR (151 aa)) enclose the Helicase C-terminal domain. The disordered stretch occupies residues 497–621 (ESLTTDNVRR…RGKSSSARAS (125 aa)). The segment covering 503-537 (NVRRDAARTHITQEKGRSVKQIREVSKQRNSRDKP) has biased composition (basic and acidic residues). Residues 555–572 (KSSSSSFSKPRKASSPPE) show a composition bias toward low complexity.

It belongs to the DEAD box helicase family.

The enzyme catalyses ATP + H2O = ADP + phosphate + H(+). The protein is DEAD-box ATP-dependent RNA helicase 39 (RH39) of Arabidopsis thaliana (Mouse-ear cress).